The chain runs to 215 residues: Adenylate kinase (215 aa).

10-15 (GAGKGT) is a binding site for ATP. Positions 30 to 59 (STGDMLRAAVKAGSPLGQQVKGVMDSGGLV) are NMP. AMP contacts are provided by residues threonine 31, arginine 36, 57–59 (GLV), 85–88 (GFPR), and glutamine 92. The segment at 122–159 (GRRVHPASGRVYHTEHNPPKVAGKDDVTGEDLIQREDD) is LID. ATP contacts are provided by residues arginine 123 and 132-133 (VY). Arginine 156 and arginine 167 together coordinate AMP. Glycine 201 is a binding site for ATP.

Belongs to the adenylate kinase family. In terms of assembly, monomer.

It is found in the cytoplasm. The catalysed reaction is AMP + ATP = 2 ADP. It participates in purine metabolism; AMP biosynthesis via salvage pathway; AMP from ADP: step 1/1. Functionally, catalyzes the reversible transfer of the terminal phosphate group between ATP and AMP. Plays an important role in cellular energy homeostasis and in adenine nucleotide metabolism. The chain is Adenylate kinase from Pseudomonas paraeruginosa (strain DSM 24068 / PA7) (Pseudomonas aeruginosa (strain PA7)).